Reading from the N-terminus, the 444-residue chain is Ribosomal protein uS12 methylthiotransferase RimO (444 aa).

The MTTase N-terminal domain maps to 4–120 (KSAALVSLGC…LKSFIRDHEA (117 aa)). Positions 13, 49, 83, 157, 161, and 164 each coordinate [4Fe-4S] cluster. In terms of domain architecture, Radical SAM core spans 143–371 (VEGRSSAYVK…LELQRGISRR (229 aa)). The region spanning 374-442 (ESLVGRVLPV…DYDVEAELLS (69 aa)) is the TRAM domain.

Belongs to the methylthiotransferase family. RimO subfamily. Requires [4Fe-4S] cluster as cofactor.

It is found in the cytoplasm. It catalyses the reaction L-aspartate(89)-[ribosomal protein uS12]-hydrogen + (sulfur carrier)-SH + AH2 + 2 S-adenosyl-L-methionine = 3-methylsulfanyl-L-aspartate(89)-[ribosomal protein uS12]-hydrogen + (sulfur carrier)-H + 5'-deoxyadenosine + L-methionine + A + S-adenosyl-L-homocysteine + 2 H(+). In terms of biological role, catalyzes the methylthiolation of an aspartic acid residue of ribosomal protein uS12. The chain is Ribosomal protein uS12 methylthiotransferase RimO from Syntrophobacter fumaroxidans (strain DSM 10017 / MPOB).